Here is a 574-residue protein sequence, read N- to C-terminus: NADH-ubiquinone oxidoreductase chain 5 (574 aa).

Helical transmembrane passes span 10–30, 50–70, 87–107, 111–131, 141–161, 181–203, 211–231, 240–260, 280–300, 301–321, 340–360, 381–401, 423–443, 458–478, 489–509, and 554–574; these read VASK…LYMV, MMMT…VVMI, FINR…MLIF, LIIL…LVIY, GMIT…AIAW, YQAL…SSWL, TPVS…FLLI, VWWF…MAGL, LGMM…FHMV, THAM…HSHM, TSCL…SGFY, LILF…MCVV, MLLL…ILPL, TLML…TTNM, IINY…QFMM, and TPMN…LVAI.

It belongs to the complex I subunit 5 family.

Its subcellular location is the mitochondrion inner membrane. The enzyme catalyses a ubiquinone + NADH + 5 H(+)(in) = a ubiquinol + NAD(+) + 4 H(+)(out). Core subunit of the mitochondrial membrane respiratory chain NADH dehydrogenase (Complex I) that is believed to belong to the minimal assembly required for catalysis. Complex I functions in the transfer of electrons from NADH to the respiratory chain. The immediate electron acceptor for the enzyme is believed to be ubiquinone. This Lumbricus terrestris (Common earthworm) protein is NADH-ubiquinone oxidoreductase chain 5 (ND5).